The primary structure comprises 519 residues: MSELLDSIQPYLTKWYVVISALLVSFFIAHKISVARFKATHNCAASPEYYKVNWFSLPLLYRLIQVKREGRLLDFAQKIYDDVKALTFVIKIVGVPVIITRDPENMKAVLATQFNDFALGTRHAHFKPLLGDGIFTLDGNGWKQSRSMLRPQFSREQVAHVQALEPHLQRLAKHIRLADGETINIQDLFFKLTVDTATEFLFGQSVYSLKDAAINDPPTEDFDGRSSFANSFNTAQTYLGTRAYLQMFYFIVNNSDFRKCCKQVHDFTRFYVQKGLDMTPEELEKKSENGYVFLYELVKQTRDPKVLQDQLLNILLAGRDTTAGLLSFTFFELARHPRVFNKLKEEIYEAFGKGDDARVSEITFESLKKCEYLKWVMNEMLRLYPSVPVNFRVATKRTTLPRGGGPDGNSPIYVGKGTTVAYSVYSTHRMEEYYGKDADEFKPERWAESRKLGWAYVPFNGGPRICLGQQFALTEASYIVTRLLQMFDKLELHDDRPYPPAKSVHLTMCHQDGVYVSLS.

Cysteine 466 lines the heme pocket.

The protein belongs to the cytochrome P450 family. Requires heme as cofactor.

Its subcellular location is the membrane. Together with an NADPH cytochrome P450 the enzyme system catalyzes the terminal hydroxylation as the first step in the assimilation of alkanes and fatty acids. In Debaryomyces hansenii (Yeast), this protein is Cytochrome P450 52A13 (CYP52A13).